The chain runs to 263 residues: Hydroxyethylthiazole kinase (263 aa).

M45 serves as a coordination point for substrate. Positions 121 and 167 each coordinate ATP. A substrate-binding site is contributed by G194.

It belongs to the Thz kinase family. Requires Mg(2+) as cofactor.

The catalysed reaction is 5-(2-hydroxyethyl)-4-methylthiazole + ATP = 4-methyl-5-(2-phosphooxyethyl)-thiazole + ADP + H(+). Its pathway is cofactor biosynthesis; thiamine diphosphate biosynthesis; 4-methyl-5-(2-phosphoethyl)-thiazole from 5-(2-hydroxyethyl)-4-methylthiazole: step 1/1. Catalyzes the phosphorylation of the hydroxyl group of 4-methyl-5-beta-hydroxyethylthiazole (THZ). This chain is Hydroxyethylthiazole kinase, found in Vibrio campbellii (strain ATCC BAA-1116).